We begin with the raw amino-acid sequence, 236 residues long: Mitochondrial inner membrane protease ATP23 (236 aa).

A divalent metal cation is bound at residue His136. The active site involves Glu137. A divalent metal cation is bound at residue His140.

Belongs to the peptidase M76 family.

It localises to the mitochondrion inner membrane. Functionally, has a dual role in the assembly of mitochondrial ATPase. Acts as a protease that removes N-terminal residues of mitochondrial ATPase CF(0) subunit 6 at the intermembrane space side. Also involved in the correct assembly of the membrane-embedded ATPase CF(0) particle, probably mediating association of subunit 6 with the subunit 9 ring. In Debaryomyces hansenii (strain ATCC 36239 / CBS 767 / BCRC 21394 / JCM 1990 / NBRC 0083 / IGC 2968) (Yeast), this protein is Mitochondrial inner membrane protease ATP23 (ATP23).